The sequence spans 385 residues: Cyclin-A3-2 (385 aa).

Residues 1–110 are disordered; sequence MADKENSTPA…STSTASPSSG (110 aa). 3 stretches are compositionally biased toward low complexity: residues 7–41, 74–88, and 96–110; these read STPA…GAPP, PSSK…AAAP, and PVSS…PSSG.

Belongs to the cyclin family. Cyclin AB subfamily.

In Oryza sativa subsp. japonica (Rice), this protein is Cyclin-A3-2 (CYCA3-2).